Consider the following 161-residue polypeptide: Protein-lysine N-methyltransferase (161 aa).

Residues 34–40 (DLGCGDG) carry the DxGxGxG SAM-binding motif motif.

It belongs to the class I-like SAM-binding methyltransferase superfamily. In terms of assembly, monomer.

The catalysed reaction is L-lysyl-[protein] + S-adenosyl-L-methionine = N(6)-methyl-L-lysyl-[protein] + S-adenosyl-L-homocysteine + H(+). Its function is as follows. Catalyzes the methylation of lysine residues in target proteins, using S-adenosyl-L-methionine (SAM) as the methyl donor. Exhibits broad substrate specificity, being able to methylate the crenarchaeal chromatin protein Cren7 primarily at 'Lys-11', 'Lys-16' and 'Lys-31', as well as a number of recombinant Sulfolobus proteins in vitro. Methylates lysine residues in a rather sequence-independent manner. This chain is Protein-lysine N-methyltransferase, found in Saccharolobus islandicus (strain REY15A) (Sulfolobus islandicus).